The sequence spans 208 residues: UPF0316 protein SERP1448 (208 aa).

3 helical membrane passes run 8-28, 40-60, and 66-86; these read PWLM…FLTM, VAAV…GLVM, and IQNI…GMKI.

This sequence belongs to the UPF0316 family.

Its subcellular location is the cell membrane. In Staphylococcus epidermidis (strain ATCC 35984 / DSM 28319 / BCRC 17069 / CCUG 31568 / BM 3577 / RP62A), this protein is UPF0316 protein SERP1448.